Reading from the N-terminus, the 1966-residue chain is Alpha-protein kinase 2 (1966 aa).

6 disordered regions span residues 23 to 65, 211 to 231, 1211 to 1259, 1303 to 1365, 1386 to 1423, and 1437 to 1463; these read NSSP…STGL, AMNSEQSPDQPFSIASNDTDK, LKSN…AYSD, SLPN…EGAG, KTQGKKKKKHVQHGTPKPENDAPTDVRSESRQKNVNGK, and NKPVAQPSGKTDITKKDSAQKVMSVRP. Polar residues predominate over residues 211–227; the sequence is AMNSEQSPDQPFSIASN. The span at 1211–1221 shows a compositional bias: low complexity; the sequence is LKSNKKSSSSD. The segment covering 1325 to 1342 has biased composition (basic and acidic residues); that stretch reads SDGKMRSKHKEKPDDKQQ. Over residues 1388–1397 the composition is skewed to basic residues; it reads QGKKKKKHVQ. Over residues 1401–1417 the composition is skewed to basic and acidic residues; sequence PKPENDAPTDVRSESRQ. An Ig-like domain is found at 1577 to 1659; that stretch reads PRVVSEIQAD…SLIVANISVS (83 aa). Cys-1599 and Cys-1649 are joined by a disulfide. An Alpha-type protein kinase domain is found at 1702–1934; it reads KEDFLSDQYF…YCELLGLVSL (233 aa). The interval 1937-1966 is disordered; it reads KPKRTVAPPKPKTQPVPKKKTFGPVLNAKS.

It belongs to the protein kinase superfamily. Alpha-type protein kinase family. ALPK subfamily. As to expression, expressed in developing cardiac tissue.

The protein localises to the basolateral cell membrane. The catalysed reaction is L-seryl-[protein] + ATP = O-phospho-L-seryl-[protein] + ADP + H(+). It carries out the reaction L-threonyl-[protein] + ATP = O-phospho-L-threonyl-[protein] + ADP + H(+). Protein kinase that recognizes phosphorylation sites in which the surrounding peptides have an alpha-helical conformation. Regulates cardiac development and cardiomyocyte differentiation by negatively regulating Wnt/beta-catenin signaling. In Danio rerio (Zebrafish), this protein is Alpha-protein kinase 2 (alpk2).